Reading from the N-terminus, the 356-residue chain is Ferrochelatase (356 aa).

The Fe cation site is built by His214 and Glu295.

Belongs to the ferrochelatase family.

The protein resides in the cytoplasm. The enzyme catalyses heme b + 2 H(+) = protoporphyrin IX + Fe(2+). Its pathway is porphyrin-containing compound metabolism; protoheme biosynthesis; protoheme from protoporphyrin-IX: step 1/1. In terms of biological role, catalyzes the ferrous insertion into protoporphyrin IX. This Paraburkholderia phymatum (strain DSM 17167 / CIP 108236 / LMG 21445 / STM815) (Burkholderia phymatum) protein is Ferrochelatase.